Here is a 196-residue protein sequence, read N- to C-terminus: Imidazole glycerol phosphate synthase subunit HisH (196 aa).

The 195-residue stretch at 2 to 196 (KVAVVKYNAG…ERVLRNFLDL (195 aa)) folds into the Glutamine amidotransferase type-1 domain. Residue Cys-77 is the Nucleophile of the active site. Active-site residues include His-178 and Glu-180.

As to quaternary structure, heterodimer of HisH and HisF.

It localises to the cytoplasm. It carries out the reaction 5-[(5-phospho-1-deoxy-D-ribulos-1-ylimino)methylamino]-1-(5-phospho-beta-D-ribosyl)imidazole-4-carboxamide + L-glutamine = D-erythro-1-(imidazol-4-yl)glycerol 3-phosphate + 5-amino-1-(5-phospho-beta-D-ribosyl)imidazole-4-carboxamide + L-glutamate + H(+). It catalyses the reaction L-glutamine + H2O = L-glutamate + NH4(+). It functions in the pathway amino-acid biosynthesis; L-histidine biosynthesis; L-histidine from 5-phospho-alpha-D-ribose 1-diphosphate: step 5/9. IGPS catalyzes the conversion of PRFAR and glutamine to IGP, AICAR and glutamate. The HisH subunit catalyzes the hydrolysis of glutamine to glutamate and ammonia as part of the synthesis of IGP and AICAR. The resulting ammonia molecule is channeled to the active site of HisF. The chain is Imidazole glycerol phosphate synthase subunit HisH from Bacteroides thetaiotaomicron (strain ATCC 29148 / DSM 2079 / JCM 5827 / CCUG 10774 / NCTC 10582 / VPI-5482 / E50).